The sequence spans 293 residues: Germ cell-specific gene 1-like protein 2 (293 aa).

Residues Met-1–Gln-8 are Cytoplasmic-facing. Residues Ala-9–Ser-29 form a helical membrane-spanning segment. Residues His-30 to Gly-120 are Extracellular-facing. Residues Asn-59 and Asn-67 are each glycosylated (N-linked (GlcNAc...) asparagine). Residues Val-121–Ile-141 traverse the membrane as a helical segment. Topologically, residues Leu-142–Asp-160 are cytoplasmic. Residues Ala-161 to Tyr-181 traverse the membrane as a helical segment. The Extracellular portion of the chain corresponds to Thr-182–Gly-204. A helical membrane pass occupies residues Trp-205–Met-225. At Ser-226–Cys-293 the chain is on the cytoplasmic side.

The protein belongs to the GSG1 family.

It is found in the membrane. This chain is Germ cell-specific gene 1-like protein 2, found in Homo sapiens (Human).